A 180-amino-acid polypeptide reads, in one-letter code: MKVKMIMLLFQILAILTLKSDSADVPDGYIQENVALRGRATQSAQLRGEHAGISHASNAIDGNRDSYFYHGSCSHTEGDNPLWRVDLLQVYTITSVTITNRGDCCGERISGARILIGKHLENNGINNPECSTINIMAAGETRTFHCPQPMIGRYVTVYLPKTGTLHLCEVEVNVLFPAPC.

A signal peptide spans 1-22 (MKVKMIMLLFQILAILTLKSDS). The tract at residues 31-179 (QENVALRGRA…VEVNVLFPAP (149 aa)) is F5/8 type C-like. Ca(2+)-binding residues include asparagine 58, aspartate 61, asparagine 63, and serine 72. 3 cysteine pairs are disulfide-bonded: cysteine 73-cysteine 168, cysteine 104-cysteine 105, and cysteine 130-cysteine 146. Alpha-L-fucose is bound by residues histidine 75 and arginine 101. Positions 101–103 (RGD) match the Cell attachment site motif. Arginine 108 contacts alpha-L-fucose. Positions 168 and 169 each coordinate Ca(2+).

It belongs to the fucolectin family. In terms of assembly, homotrimer. Parenchymal hepatocytes.

Its subcellular location is the secreted. It is found in the extracellular space. In terms of biological role, acts as a defensive agent. Recognizes blood group fucosylated oligosaccharides including A, B, H and Lewis B-type antigens. Does not recognize Lewis A antigen and has low affinity for monovalent haptens. The chain is Fucolectin-2 from Anguilla japonica (Japanese eel).